Reading from the N-terminus, the 61-residue chain is DNA-directed RNA polymerase subunit 12-like protein (61 aa).

4 residues coordinate Zn(2+): Cys21, Cys24, Cys38, and Cys41.

Belongs to the archaeal Rpo12/eukaryotic RPC10 RNA polymerase subunit family.

It localises to the nucleus. The sequence is that of DNA-directed RNA polymerase subunit 12-like protein (NRPB12L) from Arabidopsis thaliana (Mouse-ear cress).